Here is a 486-residue protein sequence, read N- to C-terminus: CUGBP Elav-like family member 1 (486 aa).

Methionine 1 is modified (N-acetylmethionine). Threonine 4 is modified (phosphothreonine). 2 RRM domains span residues 16–99 (IKMF…PADS) and 108–188 (RKLF…FADT). Lysine 109 is covalently cross-linked (Glycyl lysine isopeptide (Lys-Gly) (interchain with G-Cter in SUMO2)). Residues serine 179 and serine 302 each carry the phosphoserine modification. The interval 277 to 309 (TPSGTNALTTSSSPLSVLTSSGSSPSSSSSNSV) is disordered. A compositionally biased stretch (low complexity) spans 284–309 (LTTSSSPLSVLTSSGSSPSSSSSNSV). In terms of domain architecture, RRM 3 spans 401–479 (ANLFIYHLPQ…KRLKVQLKRS (79 aa)).

It belongs to the CELF/BRUNOL family. Component of an EIF2 complex at least composed of CELF1/CUGBP1, CALR, CALR3, EIF2S1, EIF2S2, HSP90B1 and HSPA5. Associates with polysomes. Interacts with HNRNPH1; the interaction in RNA-dependent. Interacts with PARN. In terms of processing, phosphorylated. Its phosphorylation status increases in senescent cells. As to expression, ubiquitous.

The protein resides in the nucleus. It localises to the cytoplasm. Functionally, RNA-binding protein implicated in the regulation of several post-transcriptional events. Involved in pre-mRNA alternative splicing, mRNA translation and stability. Mediates exon inclusion and/or exclusion in pre-mRNA that are subject to tissue-specific and developmentally regulated alternative splicing. Specifically activates exon 5 inclusion of cardiac isoforms of TNNT2 during heart remodeling at the juvenile to adult transition. Acts both as an activator and as a repressor of a pair of coregulated exons: promotes inclusion of the smooth muscle (SM) exon but exclusion of the non-muscle (NM) exon in actinin pre-mRNAs. Activates SM exon 5 inclusion by antagonizing the repressive effect of PTB. Promotes exclusion of exon 11 of the INSR pre-mRNA. Inhibits, together with HNRNPH1, insulin receptor (IR) pre-mRNA exon 11 inclusion in myoblast. Increases translation and controls the choice of translation initiation codon of CEBPB mRNA. Increases mRNA translation of CEBPB in aging liver. Increases translation of CDKN1A mRNA by antagonizing the repressive effect of CALR3. Mediates rapid cytoplasmic mRNA deadenylation. Recruits the deadenylase PARN to the poly(A) tail of EDEN-containing mRNAs to promote their deadenylation. Required for completion of spermatogenesis. Binds to (CUG)n triplet repeats in the 3'-UTR of transcripts such as DMPK and to Bruno response elements (BREs). Binds to muscle-specific splicing enhancer (MSE) intronic sites flanking the alternative exon 5 of TNNT2 pre-mRNA. Binds to AU-rich sequences (AREs or EDEN-like) localized in the 3'-UTR of JUN and FOS mRNAs. Binds to the IR RNA. Binds to the 5'-region of CDKN1A and CEBPB mRNAs. Binds with the 5'-region of CEBPB mRNA in aging liver. May be a specific regulator of miRNA biogenesis. Binds to primary microRNA pri-MIR140 and, with CELF2, negatively regulates the processing to mature miRNA. The polypeptide is CUGBP Elav-like family member 1 (CELF1) (Homo sapiens (Human)).